Consider the following 825-residue polypeptide: PR domain zinc finger protein 1 (825 aa).

Positions 84-201 (PRNLLFKYAT…ANQELLVWYC (118 aa)) constitute an SET domain. Positions 324–361 (ITRSPIPSSTTPSPSARSSPDQSLKSSSPHSSPGNTVS) are enriched in low complexity. The tract at residues 324-369 (ITRSPIPSSTTPSPSARSSPDQSLKSSSPHSSPGNTVSPVGPGSQE) is disordered. An interaction with PIAS1 region spans residues 527-574 (HVVQPKATSAAMAAPSSDEAMNLIKNKRNMTGYKTLPYPLKKQNGKIK). C2H2-type zinc fingers lie at residues 575–597 (YECN…LRVH), 603–625 (FKCQ…YLVH), 631–653 (HECQ…LRLH), and 659–681 (YQCK…KRLH). Lys816 participates in a covalent cross-link: Glycyl lysine isopeptide (Lys-Gly) (interchain with G-Cter in SUMO1); alternate. Lys816 participates in a covalent cross-link: Glycyl lysine isopeptide (Lys-Gly) (interchain with G-Cter in SUMO2); alternate.

Belongs to the class V-like SAM-binding methyltransferase superfamily. In terms of assembly, interacts with PRMT5. Interacts with FBXO10. Interacts with FBXO11. Interacts with multiple nuclear sumoylation E3 ligases, including CBX4, PIAS1, PIAS2, PIAS3, PIAS4, PML and RNF4, but not RANBP2. Interacts with LDB1, SMARCD3 and SMARCC1. Interacts with EEIG1; following TNFSF11/RANKL stimulation in bone marrow-derived macrophages, the interaction promotes the binding of PRDM1/BLIMP1 to the gene promoter of IRF8. Post-translationally, sumoylation at Lys-816 by PIAS1 augments transcriptional repressor activity, and is critical for plasma cell differentiation. Can be sumoylated with SUMO1 and SUMO2 by PML. Degradation of the wild-type protein mostly depends upon sumoylation, rather than ubiquitination. Desumoylated by SENP1 and SENP6. In terms of processing, ubiquitinated by the SCF(FBXO11) complex, leading to its degradation by the proteasome.

Its subcellular location is the nucleus. The protein resides in the cytoplasm. Its function is as follows. Transcription factor that mediates a transcriptional program in various innate and adaptive immune tissue-resident lymphocyte T cell types such as tissue-resident memory T (Trm), natural killer (trNK) and natural killer T (NKT) cells and negatively regulates gene expression of proteins that promote the egress of tissue-resident T-cell populations from non-lymphoid organs. Plays a role in the development, retention and long-term establishment of adaptive and innate tissue-resident lymphocyte T cell types in non-lymphoid organs, such as the skin and gut, but also in other nonbarrier tissues like liver and kidney, and therefore may provide immediate immunological protection against reactivating infections or viral reinfection. Binds specifically to the PRDI element in the promoter of the beta-interferon gene. Drives the maturation of B-lymphocytes into Ig secreting cells. Associates with the transcriptional repressor ZNF683 to chromatin at gene promoter regions. Binds to the promoter and acts as a transcriptional repressor of IRF8, thereby promotes transcription of osteoclast differentiation factors such as NFATC1 and EEIG1. This chain is PR domain zinc finger protein 1 (PRDM1), found in Homo sapiens (Human).